Here is a 200-residue protein sequence, read N- to C-terminus: Holliday junction branch migration complex subunit RuvA (200 aa).

The interval 1 to 63 (MIASVRGEVL…EDSMTLYGFP (63 aa)) is domain I. Residues 64–142 (DSESKELFGL…AVASTSGAVP (79 aa)) are domain II. Positions 142-146 (PLGAG) are flexible linker. The domain III stretch occupies residues 147-200 (GGGSVRDQIVEALVGLGFPAKQAEQAADSVLAEAPESTTSTALRSALSLLGKTR).

Belongs to the RuvA family. Homotetramer. Forms an RuvA(8)-RuvB(12)-Holliday junction (HJ) complex. HJ DNA is sandwiched between 2 RuvA tetramers; dsDNA enters through RuvA and exits via RuvB. An RuvB hexamer assembles on each DNA strand where it exits the tetramer. Each RuvB hexamer is contacted by two RuvA subunits (via domain III) on 2 adjacent RuvB subunits; this complex drives branch migration. In the full resolvosome a probable DNA-RuvA(4)-RuvB(12)-RuvC(2) complex forms which resolves the HJ.

It localises to the cytoplasm. Functionally, the RuvA-RuvB-RuvC complex processes Holliday junction (HJ) DNA during genetic recombination and DNA repair, while the RuvA-RuvB complex plays an important role in the rescue of blocked DNA replication forks via replication fork reversal (RFR). RuvA specifically binds to HJ cruciform DNA, conferring on it an open structure. The RuvB hexamer acts as an ATP-dependent pump, pulling dsDNA into and through the RuvAB complex. HJ branch migration allows RuvC to scan DNA until it finds its consensus sequence, where it cleaves and resolves the cruciform DNA. This chain is Holliday junction branch migration complex subunit RuvA, found in Rhodococcus jostii (strain RHA1).